A 39-amino-acid chain; its full sequence is Photosystem II reaction center protein Y (39 aa).

The helical transmembrane segment at 4–22 (TLVVFAPIIAALAWVIFNI) threads the bilayer.

The protein belongs to the PsbY family. PSII is composed of 1 copy each of membrane proteins PsbA, PsbB, PsbC, PsbD, PsbE, PsbF, PsbH, PsbI, PsbJ, PsbK, PsbL, PsbM, PsbT, PsbX, PsbY, Psb30/Ycf12, peripheral proteins PsbO, CyanoQ (PsbQ), PsbU, PsbV and a large number of cofactors. It forms dimeric complexes.

Its subcellular location is the cellular thylakoid membrane. In terms of biological role, loosely associated component of the core of photosystem II (PSII), it is not always seen in crystals. PSII is a light-driven water plastoquinone oxidoreductase, using light energy to abstract electrons from H(2)O, generating a proton gradient subsequently used for ATP formation. The chain is Photosystem II reaction center protein Y from Prochlorococcus marinus (strain MIT 9515).